The chain runs to 352 residues: UDP-3-O-acylglucosamine N-acyltransferase (352 aa).

His257 (proton acceptor) is an active-site residue.

This sequence belongs to the transferase hexapeptide repeat family. LpxD subfamily. Homotrimer.

It catalyses the reaction a UDP-3-O-[(3R)-3-hydroxyacyl]-alpha-D-glucosamine + a (3R)-hydroxyacyl-[ACP] = a UDP-2-N,3-O-bis[(3R)-3-hydroxyacyl]-alpha-D-glucosamine + holo-[ACP] + H(+). It functions in the pathway bacterial outer membrane biogenesis; LPS lipid A biosynthesis. Its function is as follows. Catalyzes the N-acylation of UDP-3-O-acylglucosamine using 3-hydroxyacyl-ACP as the acyl donor. Is involved in the biosynthesis of lipid A, a phosphorylated glycolipid that anchors the lipopolysaccharide to the outer membrane of the cell. The chain is UDP-3-O-acylglucosamine N-acyltransferase from Methylobacterium nodulans (strain LMG 21967 / CNCM I-2342 / ORS 2060).